A 322-amino-acid polypeptide reads, in one-letter code: uncharacterized protein (322 aa).

Belongs to the glycosyltransferase 2 family.

This is an uncharacterized protein from Nostoc sp. (strain PCC 7120 / SAG 25.82 / UTEX 2576).